The following is a 130-amino-acid chain: Small ribosomal subunit protein uS8 (130 aa).

The protein belongs to the universal ribosomal protein uS8 family. As to quaternary structure, part of the 30S ribosomal subunit. Contacts proteins S5 and S12.

Functionally, one of the primary rRNA binding proteins, it binds directly to 16S rRNA central domain where it helps coordinate assembly of the platform of the 30S subunit. The polypeptide is Small ribosomal subunit protein uS8 (Buchnera aphidicola subsp. Acyrthosiphon kondoi (Acyrthosiphon kondoi symbiotic bacterium)).